Consider the following 28-residue polypeptide: MLPRKYKPAYKKQAHRVKSNPQPAYTFQ.

Residues 1–18 show a composition bias toward basic residues; that stretch reads MLPRKYKPAYKKQAHRVK. The interval 1–28 is disordered; that stretch reads MLPRKYKPAYKKQAHRVKSNPQPAYTFQ. Over residues 19–28 the composition is skewed to polar residues; it reads SNPQPAYTFQ.

This is an uncharacterized protein from Saccharomyces cerevisiae (strain ATCC 204508 / S288c) (Baker's yeast).